The sequence spans 497 residues: Interferon regulatory factor 5 (497 aa).

Residues 12 to 18 (PRRVRLK) carry the Nuclear localization signal motif. A DNA-binding region (IRF tryptophan pentad repeat) is located at residues 14–122 (RVRLKPWLVA…QPYKIYEVCS (109 aa)). Residues 124–178 (GPAPTESQPTDDYVLGEEEEEEEEELQRMLPGLSITEPALPGPPNAPYSLPKEDT) are disordered. Residues 137–148 (VLGEEEEEEEEE) are compositionally biased toward acidic residues. A Nuclear export signal motif is present at residues 149-159 (LQRMLPGLSIT). Residue Ser-157 is modified to Phosphoserine; by TBK1. The residue at position 300 (Ser-300) is a Phosphoserine. Glycyl lysine isopeptide (Lys-Gly) (interchain with G-Cter in ubiquitin) cross-links involve residues Lys-410 and Lys-411. The residue at position 430 (Ser-430) is a Phosphoserine. Position 434 is a phosphoserine; by IKKB (Ser-434). 2 positions are modified to phosphoserine: Ser-436 and Ser-439. At Ser-445 the chain carries Phosphoserine; by IKKB.

This sequence belongs to the IRF family. As to quaternary structure, homodimer, when phosphorylated. Interacts with TASL (via pLxIS motif); interaction takes place downstream of TLR7, TLR8 or TLR9, leading to its activation. Interacts with MYD88 and TRAF6. Phosphorylation of serine and threonine residues by IKBKB in a C-terminal autoinhibitory region, stimulates dimerization, transport into the nucleus, assembly with the coactivator CBP/EP300 and initiation of transcription. Post-translationally, 'Lys-63'-linked polyubiquitination by TRAF6 is required for activation.

It is found in the cytoplasm. It localises to the nucleus. With respect to regulation, maintained as a monomer in an autoinhibited state. Phosphorylation and activation follow the following steps: innate adapter protein TASL recruits IRF5, thereby licensing IRF5 for phosphorylation by IKBKB. Phosphorylated IRF5 dissociates from the adapter proteins, dimerizes, and then enters the nucleus to induce IFNs. Its function is as follows. Transcription factor that plays a critical role in innate immunity by activating expression of type I interferon (IFN) IFNA and INFB and inflammatory cytokines downstream of endolysosomal toll-like receptors TLR7, TLR8 and TLR9. Regulates the transcription of type I IFN genes (IFN-alpha and IFN-beta) and IFN-stimulated genes (ISG) by binding to an interferon-stimulated response element (ISRE) in their promoters. Can efficiently activate both the IFN-beta (IFNB) and the IFN-alpha (IFNA) genes and mediate their induction downstream of the TLR-activated, MyD88-dependent pathway. In Mus musculus (Mouse), this protein is Interferon regulatory factor 5.